A 794-amino-acid polypeptide reads, in one-letter code: uncharacterized protein (794 aa).

A run of 9 helical transmembrane segments spans residues 34 to 54 (FSAS…VFAV), 67 to 87 (ITAA…AHLI), 99 to 119 (MLAD…AFAS), 132 to 152 (LFLF…ADVT), 257 to 277 (VGPS…AMGL), 283 to 303 (LAWI…MFQL), 315 to 335 (WSVN…VLVF), 353 to 373 (LGAL…ATLF), and 421 to 441 (WTGT…LMGV).

Its subcellular location is the cell membrane. This is an uncharacterized protein from Corynebacterium glutamicum (strain ATCC 13032 / DSM 20300 / JCM 1318 / BCRC 11384 / CCUG 27702 / LMG 3730 / NBRC 12168 / NCIMB 10025 / NRRL B-2784 / 534).